The sequence spans 139 residues: Arsenate reductase (139 aa).

Residues Cys-10, Cys-82, and Cys-89 each act as nucleophile in the active site. Disulfide bonds link Cys-10–Cys-82 and Cys-82–Cys-89.

The protein belongs to the low molecular weight phosphotyrosine protein phosphatase family. Thioredoxin-coupled ArsC subfamily.

It localises to the cytoplasm. The catalysed reaction is arsenate + [thioredoxin]-dithiol + H(+) = arsenite + [thioredoxin]-disulfide + H2O. In terms of biological role, catalyzes the reduction of arsenate [As(V)] to arsenite [As(III)]. The chain is Arsenate reductase from Halalkalibacterium halodurans (strain ATCC BAA-125 / DSM 18197 / FERM 7344 / JCM 9153 / C-125) (Bacillus halodurans).